Consider the following 187-residue polypeptide: Elongation factor P (187 aa).

It belongs to the elongation factor P family.

The protein resides in the cytoplasm. It functions in the pathway protein biosynthesis; polypeptide chain elongation. Involved in peptide bond synthesis. Stimulates efficient translation and peptide-bond synthesis on native or reconstituted 70S ribosomes in vitro. Probably functions indirectly by altering the affinity of the ribosome for aminoacyl-tRNA, thus increasing their reactivity as acceptors for peptidyl transferase. This chain is Elongation factor P, found in Ruegeria pomeroyi (strain ATCC 700808 / DSM 15171 / DSS-3) (Silicibacter pomeroyi).